The sequence spans 223 residues: MEMERINENTIRVLVDNDDLSARGITILDLLGDHQQIEDFFYSILKEVDTDHQFQNNDAVTFQVMPTNNGLELFISKNDSNFAGNEQHGPINDQVSKYIKQHLIQKNSPDQDQRKTAINDSEDNEIQHTNWQVITFDSFEDLIDFAKIAESDDVSSYLYKYNDLYYLAIAYSDSILNSNDVKDQLALAYEYGNPTATTVDFLSEHGKKIMSVSALHLIRHYFE.

The protein belongs to the MecA family. In terms of assembly, homodimer.

Its function is as follows. Enables the recognition and targeting of unfolded and aggregated proteins to the ClpC protease or to other proteins involved in proteolysis. This Limosilactobacillus reuteri (strain DSM 20016) (Lactobacillus reuteri) protein is Adapter protein MecA.